Here is a 188-residue protein sequence, read N- to C-terminus: Early nodulin-like protein 5 (188 aa).

Positions 1 to 24 (MDSSKKIIIVMFLVTFYMFSCVSS) are cleaved as a signal peptide. One can recognise a Phytocyanin domain in the interval 25–128 (TEFEVGGENG…GQKMIVKVME (104 aa)). C82 and C116 are oxidised to a cystine. The tract at residues 127-157 (METESSTESPPPSSSSSSSSSSSLPASTPKA) is disordered. A compositionally biased stretch (low complexity) spans 129 to 155 (TESSTESPPPSSSSSSSSSSSLPASTP). S170 carries GPI-anchor amidated serine lipidation. Residues 171–188 (SSGFVVSAVLIVSVFGLV) constitute a propeptide, removed in mature form.

Belongs to the early nodulin-like (ENODL) family. Mostly expressed in leaves and flowers, and, to a lower extent, in stems.

It is found in the cell membrane. May act as a carbohydrate transporter. Mainly required for reproductive functions. The chain is Early nodulin-like protein 5 from Arabidopsis thaliana (Mouse-ear cress).